We begin with the raw amino-acid sequence, 291 residues long: Protein/nucleic acid deglycase HchA (291 aa).

The segment covering 1 to 18 (MSNERDTSRTPTPDHAEH) has biased composition (basic and acidic residues). A disordered region spans residues 1-24 (MSNERDTSRTPTPDHAEHNAFFPS). C188 (nucleophile) is an active-site residue.

It belongs to the peptidase C56 family. HchA subfamily.

Its subcellular location is the cytoplasm. It carries out the reaction N(omega)-(1-hydroxy-2-oxopropyl)-L-arginyl-[protein] + H2O = lactate + L-arginyl-[protein] + H(+). It catalyses the reaction N(6)-(1-hydroxy-2-oxopropyl)-L-lysyl-[protein] + H2O = lactate + L-lysyl-[protein] + H(+). The catalysed reaction is S-(1-hydroxy-2-oxopropyl)-L-cysteinyl-[protein] + H2O = lactate + L-cysteinyl-[protein] + H(+). The enzyme catalyses N(omega)-(1-hydroxy-2-oxoethyl)-L-arginyl-[protein] + H2O = L-arginyl-[protein] + glycolate + H(+). It carries out the reaction N(6)-(1-hydroxy-2-oxoethyl)-L-lysyl-[protein] + H2O = glycolate + L-lysyl-[protein] + H(+). It catalyses the reaction S-(1-hydroxy-2-oxoethyl)-L-cysteinyl-[protein] + H2O = glycolate + L-cysteinyl-[protein] + H(+). The catalysed reaction is N(2)-(1-hydroxy-2-oxopropyl)-dGTP + H2O = lactate + dGTP + H(+). The enzyme catalyses N(2)-(1-hydroxy-2-oxopropyl)-GTP + H2O = lactate + GTP + H(+). It carries out the reaction N(2)-(1-hydroxy-2-oxopropyl)-GDP + H2O = lactate + GDP + H(+). It catalyses the reaction N(2)-(1-hydroxy-2-oxopropyl)-GMP + H2O = lactate + GMP + H(+). The catalysed reaction is N(2)-(1-hydroxy-2-oxoethyl)-dGTP + H2O = dGTP + glycolate + H(+). The enzyme catalyses N(2)-(1-hydroxy-2-oxoethyl)-GTP + H2O = glycolate + GTP + H(+). It carries out the reaction N(2)-(1-hydroxy-2-oxoethyl)-GDP + H2O = glycolate + GDP + H(+). It catalyses the reaction N(2)-(1-hydroxy-2-oxoethyl)-GMP + H2O = glycolate + GMP + H(+). The catalysed reaction is an N(2)-(1-hydroxy-2-oxopropyl)-guanosine in RNA + H2O = a guanosine in RNA + lactate + H(+). The enzyme catalyses an N(2)-(1-hydroxy-2-oxopropyl)-2'-deoxyguanosine in DNA + H2O = a 2'-deoxyguanosine in DNA + lactate + H(+). It carries out the reaction an N(2)-(1-hydroxy-2-oxoethyl)-guanosine in RNA + H2O = a guanosine in RNA + glycolate + H(+). It catalyses the reaction an N(2)-(1-hydroxy-2-oxoethyl)-2'-deoxyguanosine in DNA + H2O = a 2'-deoxyguanosine in DNA + glycolate + H(+). In terms of biological role, protein and nucleotide deglycase that catalyzes the deglycation of the Maillard adducts formed between amino groups of proteins or nucleotides and reactive carbonyl groups of glyoxals. Thus, functions as a protein deglycase that repairs methylglyoxal- and glyoxal-glycated proteins, and releases repaired proteins and lactate or glycolate, respectively. Deglycates cysteine, arginine and lysine residues in proteins, and thus reactivates these proteins by reversing glycation by glyoxals. Acts on early glycation intermediates (hemithioacetals and aminocarbinols), preventing the formation of Schiff bases and advanced glycation endproducts (AGE). Also functions as a nucleotide deglycase able to repair glycated guanine in the free nucleotide pool (GTP, GDP, GMP, dGTP) and in DNA and RNA. Is thus involved in a major nucleotide repair system named guanine glycation repair (GG repair), dedicated to reversing methylglyoxal and glyoxal damage via nucleotide sanitization and direct nucleic acid repair. Plays an important role in protecting cells from carbonyl stress. The protein is Protein/nucleic acid deglycase HchA of Pseudomonas aeruginosa (strain UCBPP-PA14).